We begin with the raw amino-acid sequence, 475 residues long: Putative amidase AmiD (475 aa).

Active-site charge relay system residues include Lys93 and Ser166. The Acyl-ester intermediate role is filled by Ser190.

Belongs to the amidase family.

The catalysed reaction is a monocarboxylic acid amide + H2O = a monocarboxylate + NH4(+). In Mycobacterium bovis (strain ATCC BAA-935 / AF2122/97), this protein is Putative amidase AmiD (amiD).